The primary structure comprises 264 residues: Acyl-[acyl-carrier-protein]--UDP-N-acetylglucosamine O-acyltransferase (264 aa).

It belongs to the transferase hexapeptide repeat family. LpxA subfamily. In terms of assembly, homotrimer.

It is found in the cytoplasm. The catalysed reaction is a (3R)-hydroxyacyl-[ACP] + UDP-N-acetyl-alpha-D-glucosamine = a UDP-3-O-[(3R)-3-hydroxyacyl]-N-acetyl-alpha-D-glucosamine + holo-[ACP]. It participates in glycolipid biosynthesis; lipid IV(A) biosynthesis; lipid IV(A) from (3R)-3-hydroxytetradecanoyl-[acyl-carrier-protein] and UDP-N-acetyl-alpha-D-glucosamine: step 1/6. Functionally, involved in the biosynthesis of lipid A, a phosphorylated glycolipid that anchors the lipopolysaccharide to the outer membrane of the cell. This chain is Acyl-[acyl-carrier-protein]--UDP-N-acetylglucosamine O-acyltransferase, found in Rickettsia prowazekii (strain Madrid E).